Consider the following 454-residue polypeptide: MVTLEEALKFSKEEIINLKKELNQKAKEQKHLGAYVEQFLDKDLSESGDGVPVAIKDNISVKDWELTCASKILQGYVAPYDASVITNLRKNNLSPFGRCNMDEFAMGSTSATSFYGKTLNPHDNTKVPGGSSGGSAAAVASGLAIASLGSDTGGSVRQPAAFCGCVGFKPSYGRVSRYGLAAYSSSLDQIGVLTQNVKDAAILYDVIAGYDEKDSTSANIAFEPTAPKLNANKKLKIAVIKNYIDQTNDDVKQALLKTIDMLKANGYEIVYKDLMDSTFDVAAYYIIAAAEASANLSRYDGVRYGRRSEKCDNLSQMYINSRSEGFGEEVKRRILLGTFVLSSGYYDAYYIKAQKARRFIKQKYEEILNDCDLIFMPVAPSVAFGFNDVKTPIQMYLEDVFTISVNLAGLGGISVPVGKNENGLNISAQLICKAYDEQTLLDGALSLEEIIKNK.

Active-site charge relay system residues include Lys-56 and Ser-131. The active-site Acyl-ester intermediate is Ser-155.

Belongs to the amidase family. GatA subfamily. In terms of assembly, heterotrimer of A, B and C subunits.

It carries out the reaction L-glutamyl-tRNA(Gln) + L-glutamine + ATP + H2O = L-glutaminyl-tRNA(Gln) + L-glutamate + ADP + phosphate + H(+). In terms of biological role, allows the formation of correctly charged Gln-tRNA(Gln) through the transamidation of misacylated Glu-tRNA(Gln) in organisms which lack glutaminyl-tRNA synthetase. The reaction takes place in the presence of glutamine and ATP through an activated gamma-phospho-Glu-tRNA(Gln). This Campylobacter lari (strain RM2100 / D67 / ATCC BAA-1060) protein is Glutamyl-tRNA(Gln) amidotransferase subunit A.